The primary structure comprises 345 residues: Gibberellin receptor GID1A (345 aa).

An N-acetylalanine modification is found at alanine 2. Residues 113-115 carry the Involved in the stabilization of the negatively charged intermediate by the formation of the oxyanion hole motif; sequence HGG. Gibberellin A4 contacts are provided by residues 115–116, tyrosine 127, and serine 191; that span reads GS. The gibberellin A3 site is built by serine 116, tyrosine 127, serine 191, and phenylalanine 238. Serine 191 is a catalytic residue. Aspartate 289 is a catalytic residue. Glycine 320 lines the gibberellin A4 pocket. Residue glycine 320 participates in gibberellin A3 binding.

The protein belongs to the 'GDXG' lipolytic enzyme family. Interacts (via N-terminus) with the DELLA proteins GAI, RGA, RGL1, RGL2 and RGL3 (via N-terminus) in a GA-dependent manner. Widely expressed.

It is found in the nucleus. Functionally, functions as a soluble gibberellin (GA) receptor. GA is an essential hormone that regulates growth and development in plants. Binds with high affinity the biologically active gibberellin GA4, but has no affinity for the biologically inactive GAs. In response to GA, interacts with specific DELLA proteins, known as repressors of GA-induced growth, and targets them for degradation via proteasome. Seems to be required for GA signaling that controls root growth, seed germination, stem elongation and flower development. Partially redundant with GID1B and GID1C. The polypeptide is Gibberellin receptor GID1A (GID1A) (Arabidopsis thaliana (Mouse-ear cress)).